The primary structure comprises 200 residues: Holliday junction branch migration complex subunit RuvA (200 aa).

The domain I stretch occupies residues 1–63 (MIGKLSGKID…EEHIHLYGFL (63 aa)). Residues 64–142 (TLEEKNFFNL…KIFSSSAIIK (79 aa)) form a domain II region. The interval 142 to 146 (KDSSN) is flexible linker. Positions 147-200 (ISSVEINEVIKALVNLGFTRFEAQNTVQGIITQNTKISIDELIKTALKNRNSSF) are domain III.

This sequence belongs to the RuvA family. Homotetramer. Forms an RuvA(8)-RuvB(12)-Holliday junction (HJ) complex. HJ DNA is sandwiched between 2 RuvA tetramers; dsDNA enters through RuvA and exits via RuvB. An RuvB hexamer assembles on each DNA strand where it exits the tetramer. Each RuvB hexamer is contacted by two RuvA subunits (via domain III) on 2 adjacent RuvB subunits; this complex drives branch migration. In the full resolvosome a probable DNA-RuvA(4)-RuvB(12)-RuvC(2) complex forms which resolves the HJ.

Its subcellular location is the cytoplasm. Functionally, the RuvA-RuvB-RuvC complex processes Holliday junction (HJ) DNA during genetic recombination and DNA repair, while the RuvA-RuvB complex plays an important role in the rescue of blocked DNA replication forks via replication fork reversal (RFR). RuvA specifically binds to HJ cruciform DNA, conferring on it an open structure. The RuvB hexamer acts as an ATP-dependent pump, pulling dsDNA into and through the RuvAB complex. HJ branch migration allows RuvC to scan DNA until it finds its consensus sequence, where it cleaves and resolves the cruciform DNA. In Rickettsia typhi (strain ATCC VR-144 / Wilmington), this protein is Holliday junction branch migration complex subunit RuvA.